A 344-amino-acid polypeptide reads, in one-letter code: N-acetyl-gamma-glutamyl-phosphate reductase (344 aa).

Cys150 is an active-site residue.

This sequence belongs to the NAGSA dehydrogenase family. Type 1 subfamily.

It localises to the cytoplasm. It catalyses the reaction N-acetyl-L-glutamate 5-semialdehyde + phosphate + NADP(+) = N-acetyl-L-glutamyl 5-phosphate + NADPH + H(+). Its pathway is amino-acid biosynthesis; L-arginine biosynthesis; N(2)-acetyl-L-ornithine from L-glutamate: step 3/4. Functionally, catalyzes the NADPH-dependent reduction of N-acetyl-5-glutamyl phosphate to yield N-acetyl-L-glutamate 5-semialdehyde. In Pseudomonas paraeruginosa (strain DSM 24068 / PA7) (Pseudomonas aeruginosa (strain PA7)), this protein is N-acetyl-gamma-glutamyl-phosphate reductase.